The chain runs to 449 residues: Putative gustatory receptor 77a (449 aa).

At 1-27 the chain is on the cytoplasmic side; sequence MPLPLGDPLALAVSPQLGYIRITAMPR. The helical transmembrane segment at 28-50 threads the bilayer; the sequence is WLQLPGMSALGILYSLTRVFGLM. Residues 51 to 70 are Extracellular-facing; it reads ATANWSPRGIKRVRQSLYLR. A helical membrane pass occupies residues 71–93; it reads IHGCVMLIFVGCFSPFAFWCIFQ. The Cytoplasmic segment spans residues 94-102; that stretch reads RMAFLRQNR. Residues 103–125 form a helical membrane-spanning segment; it reads ILLMIGFNRYVLLLVCAFMTLWI. Residues 126–205 are Extracellular-facing; sequence HCFKQAEIIG…VRRNFMYACS (80 aa). The helical transmembrane segment at 206–228 threads the bilayer; sequence LVFVSVCQAILQLSLGMYTMAIL. Residues 229–298 lie on the Cytoplasmic side of the membrane; that stretch reads FLGHLVRHSN…LLKLHRSICS (70 aa). A helical membrane pass occupies residues 299 to 321; that stretch reads LCAVQAVCFLGFVPLECTIHLFF. Residues 322 to 340 are Extracellular-facing; the sequence is TYFMKYSKFILRKYGRSFP. The chain crosses the membrane as a helical span at residues 341-363; the sequence is LNYFAIAFLVGLFTNLLLVILPT. At 364-420 the chain is on the cytoplasmic side; it reads YYSERRFNCTREIIKGGGLAFPSRITVKQLRHTMHFYGLYLKNVEHVFAVSACGLFK. The helical transmembrane segment at 421-443 threads the bilayer; that stretch reads LNNAILFCIVGAILEYLMILIQF. Residues 444–449 lie on the Extracellular side of the membrane; it reads DKVLNK.

The protein belongs to the insect chemoreceptor superfamily. Gustatory receptor (GR) family. Gr77a subfamily. As to expression, in larvae, is expressed in dorsal pharyngeal sense organ.

Its subcellular location is the cell membrane. In terms of biological role, probable gustatory receptor which mediates acceptance or avoidance behavior, depending on its substrates. This is Putative gustatory receptor 77a (Gr77a) from Drosophila melanogaster (Fruit fly).